The chain runs to 223 residues: Ribose-5-phosphate isomerase A (223 aa).

Substrate contacts are provided by residues 32–35 (TGST), 85–88 (DGAD), and 98–101 (KGGG). E107 acts as the Proton acceptor in catalysis. A substrate-binding site is contributed by K125.

The protein belongs to the ribose 5-phosphate isomerase family. In terms of assembly, homodimer.

The enzyme catalyses aldehydo-D-ribose 5-phosphate = D-ribulose 5-phosphate. The protein operates within carbohydrate degradation; pentose phosphate pathway; D-ribose 5-phosphate from D-ribulose 5-phosphate (non-oxidative stage): step 1/1. Functionally, catalyzes the reversible conversion of ribose-5-phosphate to ribulose 5-phosphate. This Pseudomonas savastanoi pv. phaseolicola (strain 1448A / Race 6) (Pseudomonas syringae pv. phaseolicola (strain 1448A / Race 6)) protein is Ribose-5-phosphate isomerase A.